The chain runs to 435 residues: Nucleoredoxin (435 aa).

Residue Ser2 is modified to N-acetylserine. The 148-residue stretch at 167–314 (PKPFREVIAG…FPWHPKPVLE (148 aa)) folds into the Thioredoxin domain.

The protein belongs to the nucleoredoxin family. As to quaternary structure, associates with the phosphatase 2A holoenzyme. Interacts with PPP2CA; the interaction is direct. Interacts with DVL1 (via PDZ domain); the interaction is direct and regulated by oxidative stress. Widely expressed with higher expression in testis and skin.

It is found in the cytoplasm. Its subcellular location is the cytosol. The protein localises to the nucleus. The enzyme catalyses [protein]-dithiol + NAD(+) = [protein]-disulfide + NADH + H(+). It carries out the reaction [protein]-dithiol + NADP(+) = [protein]-disulfide + NADPH + H(+). Functions as a redox-dependent negative regulator of the Wnt signaling pathway, possibly by preventing ubiquitination of DVL3 by the BCR(KLHL12) complex. May also function as a transcriptional regulator act as a regulator of protein phosphatase 2A (PP2A). This chain is Nucleoredoxin (Nxn), found in Mus musculus (Mouse).